The sequence spans 888 residues: Villin-like protein quail (888 aa).

The Gelsolin-like repeat unit spans residues 307-366; sequence GVYLLDNYGQSIWLWVGGQAPQADALSAMGNGRAFVKKKKYPDNTLVVRVLEGHEPVEFK. The HP domain occupies 823 to 888; sequence FDGHKKYPLT…MELKKQFKLF (66 aa).

The protein belongs to the villin/gelsolin family. In terms of tissue distribution, germline specific in adult flies.

Functionally, required for the formation of cytoplasmic actin filament bundles in nurse cells, possibly by regulating both the polymerization and organization of actin filaments. Mutations in quail result in female sterility due to the disruption of cytoplasmic transport from the nurse cells into the oocyte late in oogenesis. The chain is Villin-like protein quail (qua) from Drosophila melanogaster (Fruit fly).